The chain runs to 36 residues: MTASYLPSIFVPLVGLVFPAITMASLFIYIEQDEIV.

The chain crosses the membrane as a helical span at residues 7-29; it reads PSIFVPLVGLVFPAITMASLFIY.

Belongs to the PsaI family.

Its subcellular location is the plastid. It localises to the chloroplast thylakoid membrane. May help in the organization of the PsaL subunit. The chain is Photosystem I reaction center subunit VIII from Psilotum nudum (Whisk fern).